We begin with the raw amino-acid sequence, 652 residues long: DNA ligase (652 aa).

Residues 29–33 (DAEYD), 78–79 (SL), and E107 each bind NAD(+). The active-site N6-AMP-lysine intermediate is the K109. Residues R130, E164, K278, and K302 each coordinate NAD(+). C395, C398, C413, and C418 together coordinate Zn(2+). The BRCT domain maps to 577-652 (TDDAILSGKT…VKDEAWLLDL (76 aa)).

Belongs to the NAD-dependent DNA ligase family. LigA subfamily. It depends on Mg(2+) as a cofactor. The cofactor is Mn(2+).

The enzyme catalyses NAD(+) + (deoxyribonucleotide)n-3'-hydroxyl + 5'-phospho-(deoxyribonucleotide)m = (deoxyribonucleotide)n+m + AMP + beta-nicotinamide D-nucleotide.. Functionally, DNA ligase that catalyzes the formation of phosphodiester linkages between 5'-phosphoryl and 3'-hydroxyl groups in double-stranded DNA using NAD as a coenzyme and as the energy source for the reaction. It is essential for DNA replication and repair of damaged DNA. This is DNA ligase from Streptococcus thermophilus (strain ATCC BAA-491 / LMD-9).